The primary structure comprises 373 residues: Flagellar P-ring protein (373 aa).

Positions 1–26 (MKLFFRFVTLVAVLAMSLANVAPAWA) are cleaved as a signal peptide.

This sequence belongs to the FlgI family. As to quaternary structure, the basal body constitutes a major portion of the flagellar organelle and consists of four rings (L,P,S, and M) mounted on a central rod.

The protein resides in the periplasm. It is found in the bacterial flagellum basal body. Its function is as follows. Assembles around the rod to form the L-ring and probably protects the motor/basal body from shearing forces during rotation. The chain is Flagellar P-ring protein from Rhizobium johnstonii (strain DSM 114642 / LMG 32736 / 3841) (Rhizobium leguminosarum bv. viciae).